Reading from the N-terminus, the 156-residue chain is SsrA-binding protein (156 aa).

This sequence belongs to the SmpB family.

The protein resides in the cytoplasm. Required for rescue of stalled ribosomes mediated by trans-translation. Binds to transfer-messenger RNA (tmRNA), required for stable association of tmRNA with ribosomes. tmRNA and SmpB together mimic tRNA shape, replacing the anticodon stem-loop with SmpB. tmRNA is encoded by the ssrA gene; the 2 termini fold to resemble tRNA(Ala) and it encodes a 'tag peptide', a short internal open reading frame. During trans-translation Ala-aminoacylated tmRNA acts like a tRNA, entering the A-site of stalled ribosomes, displacing the stalled mRNA. The ribosome then switches to translate the ORF on the tmRNA; the nascent peptide is terminated with the 'tag peptide' encoded by the tmRNA and targeted for degradation. The ribosome is freed to recommence translation, which seems to be the essential function of trans-translation. In Clostridium botulinum (strain Loch Maree / Type A3), this protein is SsrA-binding protein.